The primary structure comprises 129 residues: MKKVITYGTFDLLHWGHIKLLERAKQLGDYLVVAISTDEFNLQKQKKAYHSYEHRKLILETIRYVDEVIPEKNWEQKKQDIIDHNIDVFVMGDDWEGKFDFLKDQCEVVYLPRTEGISTTKIKEEIAGL.

Residues 9–10 (TF) and 14–17 (HWGH) contribute to the CTP site. Lysine 44 lines the substrate pocket. Residue lysine 46 participates in CTP binding. Lysine 77 contributes to the substrate binding site. Residue 113-120 (RTEGISTT) participates in CTP binding.

Belongs to the cytidylyltransferase family. As to quaternary structure, homodimer.

It localises to the cytoplasm. The enzyme catalyses sn-glycerol 3-phosphate + CTP + H(+) = CDP-glycerol + diphosphate. Its pathway is cell wall biogenesis; poly(glucopyranosyl N-acetylgalactosamine 1-phosphate) teichoic acid biosynthesis. It participates in cell wall biogenesis; poly(glycerol phosphate) teichoic acid biosynthesis. With respect to regulation, inhibited by the divalent cations cadmium, mercury, tin, copper and zinc. In terms of biological role, catalyzes the transfer of the cytidylyl group of CTP to sn-glycerol 3-phosphate so the activated glycerol 3-phosphate can be used for teichoic acid synthesis, via incorporation into both the linkage unit and the teichoic acid polymer by TagB and TagF. This is Glycerol-3-phosphate cytidylyltransferase from Bacillus subtilis (strain 168).